The primary structure comprises 1040 residues: Chromatin modification-related protein rik1 (1040 aa).

Belongs to the DDB1 family. As to quaternary structure, component of the Clr4 methyltransferase complex (ClrC) composed of at least clr4, rik1, pcu4, rbx1, raf1 and raf2. The cullin pcu4, rik1, raf1, raf2 and the ring-box protein rbx1 are components of an E3 ubiquitin ligase, whose activity is essential for heterochromatin assembly.

The protein resides in the nucleus. It is found in the cytoplasm. Its subcellular location is the cytoskeleton. It localises to the microtubule organizing center. The protein localises to the spindle pole body. The protein resides in the chromosome. In terms of biological role, component of the Clr4 methyltransferase complex (ClrC) which contributes to the establishment of heterochromatin by specifically methylating histone H3 to form H3K9me. ClrC preferentially ubiquitylates H3K14 and ClrC-mediated H3 ubiquitination promotes clr4 methyltransferase activity for the methylation of H3K9. H3K9me represents a specific tag for epigenetic transcriptional repression by recruiting swi6/HP1 to methylated histones which leads to transcriptional silencing within centromeric heterochromatin, telomeric regions and at the silent mating-type loci. Rik1 is involved in the RNAi-mediated targeting of ClrC to heterochromatic repeat elements. Rik1 also has a function in meiotic telomere clustering. The sequence is that of Chromatin modification-related protein rik1 (rik1) from Schizosaccharomyces pombe (strain 972 / ATCC 24843) (Fission yeast).